The chain runs to 431 residues: MTKSAELYQKAQQTIPGGVNSPVRAFNGVGGSPIFVERADGAFIFDADGKAYIDYVGSWGPMILGHNHAVIREAVIEAAQRGLSFGAPTEMEIKMAELVSELVPSMEQLRMVSSGTEATMSAIRLARGFTGRDKILKFEGCYHGHADSLLVKAGSGALTLGQPSSPGVPADFAKHTLTATFNDLDSVRELFAANKGEIACIIVEPVAGNMNCIPPVEGFHEGLREICDQEGALLIFDEVMTGFRVALGGAQAHYNIKPDLTTLGKVIGGGMPVGAFGGRKEVMQYIAPTGPVYQAGTLSGNPVAMAAGYACLTLLREEGNEKRLASKTKHLADGFKSLAAQHGIPLVVNQVGGMFGFFFTEQEQITCYEDVTKCDIERFKRFFHLMIDHGVYLAPSAFEASFTSLAHGSKEIEATLEAADRCFAILAAESK.

An N6-(pyridoxal phosphate)lysine modification is found at Lys265.

It belongs to the class-III pyridoxal-phosphate-dependent aminotransferase family. HemL subfamily. As to quaternary structure, homodimer. Pyridoxal 5'-phosphate is required as a cofactor.

The protein resides in the cytoplasm. The enzyme catalyses (S)-4-amino-5-oxopentanoate = 5-aminolevulinate. It functions in the pathway porphyrin-containing compound metabolism; protoporphyrin-IX biosynthesis; 5-aminolevulinate from L-glutamyl-tRNA(Glu): step 2/2. This is Glutamate-1-semialdehyde 2,1-aminomutase from Vibrio vulnificus (strain CMCP6).